The sequence spans 461 residues: Phosphatidate cytidylyltransferase 1 (461 aa).

Residues 1–68 (MLELRHRGGC…PEVPPSSDRT (68 aa)) form a disordered region. Position 7 is an omega-N-methylarginine (Arg-7). A compositionally biased stretch (basic and acidic residues) spans 22–56 (REGEAAGGDHETESTSDKETDIDDRYGDLDARGDS). Phosphoserine occurs at positions 35 and 37. 6 helical membrane passes run 96-116 (MISLFFLIIYMGSFMLMLLVL), 149-169 (FLLCVNYFFYGETVADYFATF), 183-203 (HRFISFALYLAGFCMFVLSLV), 230-250 (LVIQNLFEGMIWFLVPISSVI), 279-299 (GFIGGFFSTVIFGFIAAYVLS), and 357-377 (IALSTFASLIGPFGGFFASGF).

The protein belongs to the CDS family. As to quaternary structure, homodimer. Interacts with FOS; this interaction may enhance catalytic activity. It depends on Mg(2+) as a cofactor. In terms of tissue distribution, expressed in adult brain, eye, smooth muscle and testis. Highly expressed in the inner segment of the photoreceptor layer of adult retina.

It localises to the endoplasmic reticulum membrane. The catalysed reaction is a 1,2-diacyl-sn-glycero-3-phosphate + CTP + H(+) = a CDP-1,2-diacyl-sn-glycerol + diphosphate. It carries out the reaction 1-octadecanoyl-2-(5Z,8Z,11Z,14Z-eicosatetraenoyl)-sn-glycero-3-phosphate + CTP + H(+) = 1-octadecanoyl-2-(5Z,8Z,11Z,14Z-eicosatetraenoyl)-sn-glycero-3-cytidine-5'-diphosphate + diphosphate. It catalyses the reaction 1-octadecanoyl-2-(9Z,12Z-octadecadienoyl)-sn-glycero-3-phosphate + CTP + H(+) = 1-octadecanoyl-2-(9Z,12Z-octadecadienoyl)-sn-glycero-3-cytidine-5'-diphosphate + diphosphate. The enzyme catalyses 1-hexadecanoyl-2-(5Z,8Z,11Z,14Z-eicosatetraenoyl)-sn-glycero-3-phosphate + CTP + H(+) = 1-hexadecanoyl-2-(5Z,8Z,11Z,14Z-eicosatetraenoyl)-sn-glycero-3-cytidine-5'-diphosphate + diphosphate. The catalysed reaction is 1,2-di-(5Z,8Z,11Z,14Z)-eicosatetraenoyl-sn-glycero-3-phosphate + CTP + H(+) = 1,2-di-(5Z,8Z,11Z,14Z-eicosatetraenoyl)-sn-glycero-3-cytidine-5'-diphosphate + diphosphate. It carries out the reaction 1-octadecanoyl-2-(9Z-octadecenoyl)-sn-glycero-3-phosphate + CTP + H(+) = 1-octadecanoyl-2-(9Z-octadecenoyl)-sn-glycero-3-cytidine-5'-diphosphate + diphosphate. It catalyses the reaction 1-octadecanoyl-2-(4Z,7Z,10Z,13Z,16Z,19Z-docosahexaenoyl)-sn-glycero-3-phosphate + CTP + H(+) = 1-octadecanoyl-2-(4Z,7Z,10Z,13Z,16Z,19Z-docosahexaenoyl)-sn-glycero-3-cytidine-5'-diphosphate + diphosphate. The enzyme catalyses 1,2-di-(9Z,12Z-octadecadienoyl)-sn-glycero-3-phosphate + CTP + H(+) = 1,2-di-(9Z,12Z-octadecadienoyl)-sn-glycero-3-cytidine-5'-diphosphate + diphosphate. The catalysed reaction is 1,2-di-(9Z-octadecenoyl)-sn-glycero-3-phosphate + CTP + H(+) = 1,2-di-(9Z-octadecenoyl)-sn-glycero-3-cytidine-5'-diphosphate + diphosphate. The protein operates within phospholipid metabolism; CDP-diacylglycerol biosynthesis; CDP-diacylglycerol from sn-glycerol 3-phosphate: step 3/3. Functionally, catalyzes the conversion of phosphatidic acid (PA) to CDP-diacylglycerol (CDP-DAG), an essential intermediate in the synthesis of phosphatidylglycerol, cardiolipin and phosphatidylinositol. Exhibits almost no acyl chain preference for PA, showing no discrimination for the sn-1/sn-2 acyl chain composition of PAs. Plays an important role in regulating the growth of lipid droplets which are storage organelles at the center of lipid and energy homeostasis. Positively regulates the differentiation and development of adipocytes. The chain is Phosphatidate cytidylyltransferase 1 from Mus musculus (Mouse).